Here is a 218-residue protein sequence, read N- to C-terminus: Octanoyltransferase (218 aa).

In terms of domain architecture, BPL/LPL catalytic spans Arg-31 to Glu-206. Substrate-binding positions include Arg-70–His-77, Ser-137–Gly-139, and Gly-150–Ala-152. Residue Cys-168 is the Acyl-thioester intermediate of the active site.

This sequence belongs to the LipB family.

Its subcellular location is the cytoplasm. It carries out the reaction octanoyl-[ACP] + L-lysyl-[protein] = N(6)-octanoyl-L-lysyl-[protein] + holo-[ACP] + H(+). The protein operates within protein modification; protein lipoylation via endogenous pathway; protein N(6)-(lipoyl)lysine from octanoyl-[acyl-carrier-protein]: step 1/2. Catalyzes the transfer of endogenously produced octanoic acid from octanoyl-acyl-carrier-protein onto the lipoyl domains of lipoate-dependent enzymes. Lipoyl-ACP can also act as a substrate although octanoyl-ACP is likely to be the physiological substrate. The chain is Octanoyltransferase from Pseudomonas syringae pv. syringae (strain B728a).